The primary structure comprises 92 residues: Putative membrane protein insertion efficiency factor (92 aa).

Belongs to the UPF0161 family.

The protein localises to the cell inner membrane. Could be involved in insertion of integral membrane proteins into the membrane. This chain is Putative membrane protein insertion efficiency factor, found in Synechococcus sp. (strain CC9902).